We begin with the raw amino-acid sequence, 122 residues long: UPF0102 protein CA_C1763 (122 aa).

This sequence belongs to the UPF0102 family.

The protein is UPF0102 protein CA_C1763 of Clostridium acetobutylicum (strain ATCC 824 / DSM 792 / JCM 1419 / IAM 19013 / LMG 5710 / NBRC 13948 / NRRL B-527 / VKM B-1787 / 2291 / W).